A 560-amino-acid chain; its full sequence is Cytosolic purine 5'-nucleotidase (560 aa).

Asp-52 serves as the catalytic Nucleophile. IMP-binding residues include Asp-52 and Asp-54. Mg(2+) is bound by residues Asp-52 and Asp-54. The Proton donor role is filled by Asp-54. Residues Arg-144 and Asn-154 each contribute to the ATP site. Residues Arg-202, Asp-206, Lys-215, Thr-249, Asn-250, Ser-251, and Lys-292 each contribute to the IMP site. Asp-351 is a binding site for Mg(2+). Ser-418 bears the Phosphoserine mark. The ATP site is built by Gln-453 and Arg-456. Ser-502, Ser-511, and Ser-527 each carry phosphoserine. The segment at 541–560 (PQEITHCHDEDDDEEEEEEE) is disordered. Residues 548-560 (HDEDDDEEEEEEE) are required for tetramer assembly. Positions 550–560 (EDDDEEEEEEE) are enriched in acidic residues.

The protein belongs to the 5'(3')-deoxyribonucleotidase family. In terms of assembly, homotetramer. It depends on Mg(2+) as a cofactor.

It localises to the cytoplasm. Its subcellular location is the cytosol. It carries out the reaction a ribonucleoside 5'-phosphate + H2O = a ribonucleoside + phosphate. It catalyses the reaction a 2'-deoxyribonucleoside + a ribonucleoside 5'-phosphate = a ribonucleoside + a 2'-deoxyribonucleoside 5'-phosphate. The enzyme catalyses IMP + H2O = inosine + phosphate. The catalysed reaction is GMP + H2O = guanosine + phosphate. It carries out the reaction dIMP + H2O = 2'-deoxyinosine + phosphate. It catalyses the reaction dGMP + H2O = 2'-deoxyguanosine + phosphate. The enzyme catalyses XMP + H2O = xanthosine + phosphate. The catalysed reaction is inosine + GMP = guanosine + IMP. It carries out the reaction dGMP + inosine = 2'-deoxyguanosine + IMP. It catalyses the reaction dIMP + inosine = 2'-deoxyinosine + IMP. The enzyme catalyses inosine + UMP = uridine + IMP. The catalysed reaction is inosine + CMP = cytidine + IMP. It carries out the reaction inosine + AMP = IMP + adenosine. With respect to regulation, allosterically activated by various compounds including ATP, 2,3-BPG/2,3-Bisphosphoglyceric acid and Ap4A/P1,P4-bis(5'-adenosyl) tetraphosphate. Binding of an allosteric activator is a prerequisiste to magnesium and substrate binding. Inhibited by inorganic phosphate. In terms of biological role, broad specificity cytosolic 5'-nucleotidase that catalyzes the dephosphorylation of 6-hydroxypurine nucleoside 5'-monophosphates. In addition, possesses a phosphotransferase activity by which it can transfer a phosphate from a donor nucleoside monophosphate to an acceptor nucleoside, preferably inosine, deoxyinosine and guanosine. Has the highest activities for IMP and GMP followed by dIMP, dGMP and XMP. Could also catalyze the transfer of phosphates from pyrimidine monophosphates but with lower efficiency. Through these activities regulates the purine nucleoside/nucleotide pools within the cell. The sequence is that of Cytosolic purine 5'-nucleotidase from Rattus norvegicus (Rat).